The following is a 354-amino-acid chain: MTTAILERLSTLSMSGQQLRRLPKILEEGLPKMPCTVPETDVPQLFREPYIHAGYRPTGHEWRYYFFSLFQKHNEVVNVWTHLLAALAVLLRFWAFVEAGALQWASPHTLPLLLFILSSITYLTCSLLAHLLQSKSELSHYTFYFVDYVGVSVYQYGSALAHFFYSSDQAWYELFWIFFLPAAAFCGWLSCAGCCYAKYRYRRPYPVMRKICQVVPAGLAFVLDISPVAHRVALCHLAGCQEQAAWYHTLQILFFLVSAYFFSCPVPEKYFPGSCDIVGHGHQIFHAFLSVCTLSQLEAILLDYQGRHEIFLQRHGPLSVYSACLSFFVLAACSAATATLLRHKVKDRLIKKDS.

Over 1–76 (MTTAILERLS…FSLFQKHNEV (76 aa)) the chain is Cytoplasmic. A helical membrane pass occupies residues 77-97 (VNVWTHLLAALAVLLRFWAFV). The Extracellular portion of the chain corresponds to 98–111 (EAGALQWASPHTLP). A helical membrane pass occupies residues 112–132 (LLLFILSSITYLTCSLLAHLL). The Cytoplasmic segment spans residues 133–173 (QSKSELSHYTFYFVDYVGVSVYQYGSALAHFFYSSDQAWYE). The chain crosses the membrane as a helical span at residues 174–194 (LFWIFFLPAAAFCGWLSCAGC). Residues 195–213 (CYAKYRYRRPYPVMRKICQ) are Extracellular-facing. The chain crosses the membrane as a helical span at residues 214-234 (VVPAGLAFVLDISPVAHRVAL). At 235–243 (CHLAGCQEQ) the chain is on the cytoplasmic side. A helical transmembrane segment spans residues 244-264 (AAWYHTLQILFFLVSAYFFSC). The Extracellular segment spans residues 265 to 283 (PVPEKYFPGSCDIVGHGHQ). Residues 284–304 (IFHAFLSVCTLSQLEAILLDY) form a helical membrane-spanning segment. Over 305–315 (QGRHEIFLQRH) the chain is Cytoplasmic. Residues 316-336 (GPLSVYSACLSFFVLAACSAA) traverse the membrane as a helical segment. Residues 337-354 (TATLLRHKVKDRLIKKDS) lie on the Extracellular side of the membrane.

This sequence belongs to the ADIPOR family. Expressed in brain and testis.

The protein resides in the cell membrane. In terms of biological role, plasma membrane progesterone (P4) receptor coupled to G proteins. Seems to act through a G(i) mediated pathway. May be involved in oocyte maturation. Also binds dehydroepiandrosterone (DHEA), pregnanolone, pregnenolone and allopregnanolone. The polypeptide is Membrane progestin receptor beta (Mus musculus (Mouse)).